A 266-amino-acid polypeptide reads, in one-letter code: Hydroxyethylthiazole kinase (266 aa).

Methionine 46 contributes to the substrate binding site. 2 residues coordinate ATP: arginine 122 and serine 168. A substrate-binding site is contributed by glycine 195.

The protein belongs to the Thz kinase family. Requires Mg(2+) as cofactor.

It carries out the reaction 5-(2-hydroxyethyl)-4-methylthiazole + ATP = 4-methyl-5-(2-phosphooxyethyl)-thiazole + ADP + H(+). Its pathway is cofactor biosynthesis; thiamine diphosphate biosynthesis; 4-methyl-5-(2-phosphoethyl)-thiazole from 5-(2-hydroxyethyl)-4-methylthiazole: step 1/1. Its function is as follows. Catalyzes the phosphorylation of the hydroxyl group of 4-methyl-5-beta-hydroxyethylthiazole (THZ). The protein is Hydroxyethylthiazole kinase of Oleidesulfovibrio alaskensis (strain ATCC BAA-1058 / DSM 17464 / G20) (Desulfovibrio alaskensis).